Here is a 118-residue protein sequence, read N- to C-terminus: Down syndrome critical region protein 4 (118 aa).

Residues 1–39 (MSLIILTRDDEPRIFTPDSDAASPALHSTSPLPDPASAS) form a disordered region. Residues 28 to 39 (STSPLPDPASAS) are compositionally biased toward low complexity.

In terms of tissue distribution, mainly expressed in placenta.

In Homo sapiens (Human), this protein is Down syndrome critical region protein 4 (DSCR4).